Reading from the N-terminus, the 137-residue chain is L-ectoine synthase (137 aa).

Residues 118–137 (VHREDGSYAPADEADDQKPL) form a disordered region.

This sequence belongs to the ectoine synthase family.

The catalysed reaction is (2S)-4-acetamido-2-aminobutanoate = L-ectoine + H2O. It functions in the pathway amine and polyamine biosynthesis; ectoine biosynthesis; L-ectoine from L-aspartate 4-semialdehyde: step 3/3. Seems to require potassium ions for its activity and stability. Slightly inhibited by N-ethylmaleimide. Its function is as follows. Catalyzes the circularization of gamma-N-acetyl-alpha,gamma-diaminobutyric acid (ADABA) to ectoine (1,4,5,6-tetrahydro-2-methyl-4-pyrimidine carboxylic acid), which is an excellent osmoprotectant. Does not act on N-acetylated amino acids like N-alpha-acetyl-L-asparagine,N-alpha-acetyl-L-ornithine, N-alpha-acetyl-L-lysine and N-epsilon-acetyl-L-lysine. This Halomonas elongata (strain ATCC 33173 / DSM 2581 / NBRC 15536 / NCIMB 2198 / 1H9) protein is L-ectoine synthase (ectC).